A 202-amino-acid polypeptide reads, in one-letter code: Probable adenylyl-sulfate kinase (202 aa).

36 to 43 serves as a coordination point for ATP; sequence GLSGSGKS. Ser110 serves as the catalytic Phosphoserine intermediate.

The protein belongs to the APS kinase family.

It catalyses the reaction adenosine 5'-phosphosulfate + ATP = 3'-phosphoadenylyl sulfate + ADP + H(+). It functions in the pathway sulfur metabolism; hydrogen sulfide biosynthesis; sulfite from sulfate: step 2/3. In terms of biological role, catalyzes the synthesis of activated sulfate. The protein is Probable adenylyl-sulfate kinase of Halalkalibacterium halodurans (strain ATCC BAA-125 / DSM 18197 / FERM 7344 / JCM 9153 / C-125) (Bacillus halodurans).